The primary structure comprises 410 residues: ORC1-type DNA replication protein 4 (410 aa).

ATP contacts are provided by residues 73–77, Tyr-220, and Arg-232; that span reads TGKSL.

The protein belongs to the CDC6/cdc18 family.

In terms of biological role, involved in regulation of DNA replication. This chain is ORC1-type DNA replication protein 4 (orc4), found in Halobacterium salinarum (strain ATCC 700922 / JCM 11081 / NRC-1) (Halobacterium halobium).